The sequence spans 277 residues: 2-dehydro-3-deoxyphosphooctonate aldolase (277 aa).

Belongs to the KdsA family.

The protein localises to the cytoplasm. The catalysed reaction is D-arabinose 5-phosphate + phosphoenolpyruvate + H2O = 3-deoxy-alpha-D-manno-2-octulosonate-8-phosphate + phosphate. It functions in the pathway carbohydrate biosynthesis; 3-deoxy-D-manno-octulosonate biosynthesis; 3-deoxy-D-manno-octulosonate from D-ribulose 5-phosphate: step 2/3. The protein operates within bacterial outer membrane biogenesis; lipopolysaccharide biosynthesis. The protein is 2-dehydro-3-deoxyphosphooctonate aldolase of Brucella anthropi (strain ATCC 49188 / DSM 6882 / CCUG 24695 / JCM 21032 / LMG 3331 / NBRC 15819 / NCTC 12168 / Alc 37) (Ochrobactrum anthropi).